The primary structure comprises 203 residues: Holliday junction branch migration complex subunit RuvA (203 aa).

The segment at Met1–Leu63 is domain I. The segment at Thr64 to Lys142 is domain II. The flexible linker stretch occupies residues Glu143–Asn149. Residues Ile150–Phe203 form a domain III region.

This sequence belongs to the RuvA family. In terms of assembly, homotetramer. Forms an RuvA(8)-RuvB(12)-Holliday junction (HJ) complex. HJ DNA is sandwiched between 2 RuvA tetramers; dsDNA enters through RuvA and exits via RuvB. An RuvB hexamer assembles on each DNA strand where it exits the tetramer. Each RuvB hexamer is contacted by two RuvA subunits (via domain III) on 2 adjacent RuvB subunits; this complex drives branch migration. In the full resolvosome a probable DNA-RuvA(4)-RuvB(12)-RuvC(2) complex forms which resolves the HJ.

It localises to the cytoplasm. Its function is as follows. The RuvA-RuvB-RuvC complex processes Holliday junction (HJ) DNA during genetic recombination and DNA repair, while the RuvA-RuvB complex plays an important role in the rescue of blocked DNA replication forks via replication fork reversal (RFR). RuvA specifically binds to HJ cruciform DNA, conferring on it an open structure. The RuvB hexamer acts as an ATP-dependent pump, pulling dsDNA into and through the RuvAB complex. HJ branch migration allows RuvC to scan DNA until it finds its consensus sequence, where it cleaves and resolves the cruciform DNA. The chain is Holliday junction branch migration complex subunit RuvA from Rickettsia peacockii (strain Rustic).